The sequence spans 523 residues: Polyamine aminopropyltransferase (523 aa).

A run of 7 helical transmembrane segments spans residues 20-40 (VLLAAVAACAACGLVYELALL), 51-71 (IVATSLIVAGYIAALGAGALL), 88-108 (AVLGIIGGLSAAALYAAFAFL), 116-136 (LVLAVGTALIGGLVGAEVPLL), 164-184 (LGALVGGLAWPFLLLPQLGMI), 186-206 (GAAVTGIVNLAAAGVVSIFLL), and 215-235 (LVTALCALAAALGLIATLLVH). Residues 203–478 (IFLLRHVVSG…APTPAVPSTA (276 aa)) are spermidine synthase. The region spanning 231 to 465 (TLLVHSHDIE…GDWGFALARL (235 aa)) is the PABS domain. Q261 lines the S-methyl-5'-thioadenosine pocket. A spermidine-binding site is contributed by D313. S-methyl-5'-thioadenosine contacts are provided by residues E333 and 365–366 (DA). Catalysis depends on D386, which acts as the Proton acceptor.

The protein belongs to the spermidine/spermine synthase family. Homodimer or homotetramer.

The protein resides in the cell membrane. The enzyme catalyses S-adenosyl 3-(methylsulfanyl)propylamine + putrescine = S-methyl-5'-thioadenosine + spermidine + H(+). Its pathway is amine and polyamine biosynthesis; spermidine biosynthesis; spermidine from putrescine: step 1/1. Its function is as follows. Catalyzes the irreversible transfer of a propylamine group from the amino donor S-adenosylmethioninamine (decarboxy-AdoMet) to putrescine (1,4-diaminobutane) to yield spermidine. The protein is Polyamine aminopropyltransferase of Mycobacterium bovis (strain ATCC BAA-935 / AF2122/97).